Here is a 337-residue protein sequence, read N- to C-terminus: Glyceraldehyde-3-phosphate dehydrogenase (337 aa).

Residues 12–13 (RI), Asp-34, and Lys-79 each bind NAD(+). D-glyceraldehyde 3-phosphate contacts are provided by residues 150-152 (SCT), Thr-181, 210-211 (TG), and Arg-233. Cys-151 serves as the catalytic Nucleophile. Asn-315 serves as a coordination point for NAD(+).

This sequence belongs to the glyceraldehyde-3-phosphate dehydrogenase family. Homotetramer.

Its subcellular location is the cytoplasm. It carries out the reaction D-glyceraldehyde 3-phosphate + phosphate + NAD(+) = (2R)-3-phospho-glyceroyl phosphate + NADH + H(+). It participates in carbohydrate degradation; glycolysis; pyruvate from D-glyceraldehyde 3-phosphate: step 1/5. This is Glyceraldehyde-3-phosphate dehydrogenase (GPD1) from Phaeosphaeria nodorum (strain SN15 / ATCC MYA-4574 / FGSC 10173) (Glume blotch fungus).